Reading from the N-terminus, the 406-residue chain is RILP-like protein 1 (406 aa).

The region spanning 5 to 99 is the RH1 domain; the sequence is QLGAALDKSA…LEKEKKHKKE (95 aa). A coiled-coil region spans residues 105–319; that stretch reads DVWRGEAQDL…KVFMLQEEIA (215 aa). 2 disordered regions span residues 234 to 272 and 323 to 351; these read EVSS…PAQE and SEEQ…NFQP. The span at 241–257 shows a compositional bias: basic and acidic residues; sequence EVSRLKEKLKEQSRSNE. The RH2 domain maps to 289–358; the sequence is RPRFTLQELR…FQPESGIKRL (70 aa). A compositionally biased stretch (polar residues) spans 340–351; sequence TLRTNPRSNFQP.

The protein belongs to the RILPL family.

It is found in the cytoplasm. The protein resides in the cytosol. Its subcellular location is the cytoskeleton. The protein localises to the microtubule organizing center. It localises to the centrosome. It is found in the cell projection. The protein resides in the cilium. Plays a role in the regulation of cell shape and polarity. Plays a role in cellular protein transport, including protein transport away from primary cilia. Neuroprotective protein. The chain is RILP-like protein 1 (rilpl1) from Danio rerio (Zebrafish).